The following is a 911-amino-acid chain: Alpha-actinin-4 (911 aa).

Residues 1–269 are actin-binding; the sequence is MVDYHAANQS…YVSSFYHAFS (269 aa). Residues 12–26 form an interaction with VCL region; sequence QYGPSSAGNGAGGGG. Tyr31 is subject to Phosphotyrosine. The tract at residues 40 to 61 is interaction with VCL; it reads RDLLLDPAWEKQQRKTFTAWCN. Calponin-homology (CH) domains are found at residues 50–154 and 163–269; these read KQQR…LRFA and TSAK…HAFS. An LXXLL motif motif is present at residues 84–88; sequence LMLLL. The tract at residues 108–126 is interaction with VCL; the sequence is KINNVNKALDFIASKGVKL. Position 114 is an N6-acetyllysine (Lys114). Residues 177–192 are polyphosphoinositide (PIP2)-binding; sequence TAPYKNVNVQNFHISW. Residue Lys214 is modified to N6-acetyllysine. Residue Thr249 is modified to Phosphothreonine. Spectrin repeat units follow at residues 293-403, 413-518, 528-639, and 649-752; these read HLME…WLLN, HLAE…ALEK, QLHL…ALLE, and HLRR…EVEN. N6-acetyllysine occurs at positions 592 and 625. A Phosphoserine modification is found at Ser696. A mediates interaction with MICALL2 region spans residues 736–911; the sequence is WEQLLTTIAR…STALYGESDL (176 aa). EF-hand domains follow at residues 765 to 800 and 806 to 841; these read EQMQEFRASFNHFDKDHGGALGPEEFKACLISLGYD and QGEAEFNRIMSLVDPNHSGLVTFQAFIDFMSRETTD. Ca(2+) is bound at residue Asp778. Lys779 is subject to N6-acetyllysine. Asp780 and Glu789 together coordinate Ca(2+). Position 859 is an N6-acetyllysine (Lys859). The residue at position 909 (Ser909) is a Phosphoserine.

It belongs to the alpha-actinin family. In terms of assembly, homodimer; antiparallel. Binds TRIM3 at the N-terminus. Interacts with MICALL2 (preferentially in opened conformation); stimulated by RAB13 activation. Identified in a complex with CASK, IQGAP1, MAGI2, NPHS1, SPTAN1 and SPTBN1. Identified in a IGF2BP1-dependent mRNP granule complex containing untranslated mRNAs. Component of the CART complex, at least composed of ACTN4, HGS/HRS, MYO5B and TRIM3. Interacts with MAGI1. Interacts with PDLIM2. Interacts with PPARG and RARA. Binds to VCL; this interaction triggers VCL conformational changes. Interacts with SEPTIN14. Interacts with IGSF8. Widely expressed.

The protein localises to the nucleus. It localises to the cytoplasm. It is found in the cell junction. The protein resides in the cytoskeleton. Its subcellular location is the stress fiber. The protein localises to the perinuclear region. Its function is as follows. F-actin cross-linking protein which is thought to anchor actin to a variety of intracellular structures. This is a bundling protein. Probably involved in vesicular trafficking via its association with the CART complex. The CART complex is necessary for efficient transferrin receptor recycling but not for EGFR degradation. Involved in tight junction assembly in epithelial cells probably through interaction with MICALL2. Links MICALL2 to the actin cytoskeleton and recruits it to the tight junctions. May also function as a transcriptional coactivator, stimulating transcription mediated by the nuclear hormone receptors PPARG and RARA. Association with IGSF8 regulates the immune synapse formation and is required for efficient T-cell activation. In Homo sapiens (Human), this protein is Alpha-actinin-4.